A 289-amino-acid chain; its full sequence is MEVFVVPVLADEGFEGPTKEVFQTPHWFDVGIGSVNLYLNKATALTIFAALFVGVIFWLGFRRAKIIPRGIQNLCESAYDFVDLQIARGVIGEKGARYTPYLLVLFSFVLVSNVLAIIPAAQFPATSRIAVPMVLAVVTWVMFIYAGIKSNGAGAYFKEMIDPAPTAPLAIRLLLGPIEILSTLIVRPFTLAIRLFANMFAGHLLLLVFSLGADYLLPKPPFVFGVASLLVAIVLTAFELVIDALQAYIITILTAAYIGGAMAHGEHEVAPSEELAEHAPVGVPAAAHA.

7 consecutive transmembrane segments (helical) span residues 41–61, 101–121, 129–149, 166–186, 189–209, 222–242, and 244–264; these read KATA…WLGF, YLLV…IPAA, IAVP…AGIK, TAPL…TLIV, FTLA…LLVF, FVFG…ELVI, and ALQA…AMAH.

Belongs to the ATPase A chain family. F-type ATPases have 2 components, CF(1) - the catalytic core - and CF(0) - the membrane proton channel. CF(1) has five subunits: alpha(3), beta(3), gamma(1), delta(1), epsilon(1). CF(0) has three main subunits: a(1), b(2) and c(9-12). The alpha and beta chains form an alternating ring which encloses part of the gamma chain. CF(1) is attached to CF(0) by a central stalk formed by the gamma and epsilon chains, while a peripheral stalk is formed by the delta and b chains.

It localises to the cell membrane. Key component of the proton channel; it plays a direct role in the translocation of protons across the membrane. In Frankia alni (strain DSM 45986 / CECT 9034 / ACN14a), this protein is ATP synthase subunit a.